A 141-amino-acid polypeptide reads, in one-letter code: MATKEFYFAIIGHCDQPIFEMDFPVGEKKTKESEGTRHLNHYIGHAALDIVDEHALTTSQMYLKMVDKFNEWYVSAFVTASRIRFIMLHTHRADEGIKQFFQEMYETYIKHAMNPFYEIDDVIESPAFEQKATLYGRKYLS.

This sequence belongs to the TRAPP small subunits family. Sedlin subfamily. In terms of assembly, part of the multisubunit TRAPP (transport protein particle) complex.

It is found in the cytoplasm. The protein resides in the perinuclear region. The protein localises to the endoplasmic reticulum. It localises to the golgi apparatus. Its function is as follows. May play a role in vesicular transport from endoplasmic reticulum to Golgi. Required for the systemic spread of the RNAi response. The chain is Probable trafficking protein particle complex subunit 2 (sedl-1) from Caenorhabditis elegans.